Here is a 178-residue protein sequence, read N- to C-terminus: Large ribosomal subunit protein uL6 (178 aa).

It belongs to the universal ribosomal protein uL6 family. In terms of assembly, part of the 50S ribosomal subunit.

Its function is as follows. This protein binds to the 23S rRNA, and is important in its secondary structure. It is located near the subunit interface in the base of the L7/L12 stalk, and near the tRNA binding site of the peptidyltransferase center. The chain is Large ribosomal subunit protein uL6 from Limosilactobacillus reuteri (strain DSM 20016) (Lactobacillus reuteri).